Reading from the N-terminus, the 264-residue chain is Stress response regulator protein 1 (264 aa).

Positions 50–74 (IYSDCDNNKNNNDDDDDDDDYNKDT) are disordered. The segment covering 62–74 (DDDDDDDDYNKDT) has biased composition (acidic residues). In terms of domain architecture, Response regulatory spans 138–256 (RFLIVDDNII…LDLIGGSIDD (119 aa)). Position 189 is a 4-aspartylphosphate (Asp189).

Its function is as follows. Required for stress adaptation, morphogenesis and virulence. This chain is Stress response regulator protein 1 (SRR1), found in Candida tropicalis (strain ATCC MYA-3404 / T1) (Yeast).